The following is a 292-amino-acid chain: tRNA(Ile)-lysidine synthase (292 aa).

32–37 is a binding site for ATP; it reads SGGADS.

Belongs to the tRNA(Ile)-lysidine synthase family.

It localises to the cytoplasm. The enzyme catalyses cytidine(34) in tRNA(Ile2) + L-lysine + ATP = lysidine(34) in tRNA(Ile2) + AMP + diphosphate + H(+). Ligates lysine onto the cytidine present at position 34 of the AUA codon-specific tRNA(Ile) that contains the anticodon CAU, in an ATP-dependent manner. Cytidine is converted to lysidine, thus changing the amino acid specificity of the tRNA from methionine to isoleucine. The protein is tRNA(Ile)-lysidine synthase of Corynebacterium diphtheriae (strain ATCC 700971 / NCTC 13129 / Biotype gravis).